We begin with the raw amino-acid sequence, 469 residues long: Interstitial collagenase (469 aa).

The N-terminal stretch at 1–19 (MFSLLLLLLLLCNTGSHGF) is a signal peptide. Positions 20 to 99 (PAATSETQEQ…PRCGVPDVAE (80 aa)) are cleaved as a propeptide — activation peptide. Ser57 carries the post-translational modification Phosphoserine. The Cysteine switch motif lies at 90-97 (PRCGVPDV). Cys92 is a Zn(2+) binding site. An N-linked (GlcNAc...) asparagine glycan is attached at Asn120. Residues Asp124 and Asp158 each coordinate Ca(2+). Positions 168 and 170 each coordinate Zn(2+). Ca(2+)-binding residues include Asp175, Gly176, Gly178, and Asn180. His183 is a Zn(2+) binding site. Positions 190, 192, and 194 each coordinate Ca(2+). His196 is a binding site for Zn(2+). Ca(2+)-binding residues include Asp198, Glu199, and Glu201. Position 218 (His218) interacts with Zn(2+). Residue Glu219 is part of the active site. Residues His222 and His228 each coordinate Zn(2+). Position 274 is a phosphothreonine (Thr274). Hemopexin repeat units follow at residues 275–324 (PQVC…WPQV), 325–371 (PNGL…FGFP), 374–422 (VKNI…FPGI), and 423–466 (GNKV…WFNC). Cys278 and Cys466 are joined by a disulfide. Ca(2+)-binding residues include Asp285 and Gln329. Residue Tyr360 is modified to Phosphotyrosine; by PKDCC. Ca(2+) contacts are provided by Asp378 and Asp427.

This sequence belongs to the peptidase M10A family. Ca(2+) serves as cofactor. It depends on Zn(2+) as a cofactor. Undergoes autolytic cleavage to produce a N-terminal fragment having reduced collagenolytic activity. Post-translationally, tyrosine phosphorylated in platelets by PKDCC/VLK.

The protein resides in the secreted. The protein localises to the extracellular space. It is found in the extracellular matrix. The enzyme catalyses Cleavage of the triple helix of collagen at about three-quarters of the length of the molecule from the N-terminus, at 775-Gly-|-Ile-776 in the alpha1(I) chain. Cleaves synthetic substrates and alpha-macroglobulins at bonds where P1' is a hydrophobic residue.. Its activity is regulated as follows. Can be activated without removal of the activation peptide. Cleaves collagens of types I, II, and III at one site in the helical domain. Also cleaves collagens of types VII and X. The polypeptide is Interstitial collagenase (MMP1) (Sus scrofa (Pig)).